A 291-amino-acid polypeptide reads, in one-letter code: N-acetylmannosamine kinase (291 aa).

Residues 5–12 (AIDIGGTK) and 132–139 (GVGGGVVC) contribute to the ATP site. 4 residues coordinate Zn(2+): histidine 156, cysteine 166, cysteine 168, and cysteine 173.

Belongs to the ROK (NagC/XylR) family. NanK subfamily. Homodimer.

It carries out the reaction an N-acyl-D-mannosamine + ATP = an N-acyl-D-mannosamine 6-phosphate + ADP + H(+). The protein operates within amino-sugar metabolism; N-acetylneuraminate degradation; D-fructose 6-phosphate from N-acetylneuraminate: step 2/5. In terms of biological role, catalyzes the phosphorylation of N-acetylmannosamine (ManNAc) to ManNAc-6-P. The chain is N-acetylmannosamine kinase from Salmonella gallinarum (strain 287/91 / NCTC 13346).